The chain runs to 442 residues: D-aminoacyl-tRNA deacylase (442 aa).

This sequence belongs to the DtdA deacylase family. Monomer. The cofactor is Zn(2+).

The catalysed reaction is a D-aminoacyl-tRNA + H2O = a tRNA + a D-alpha-amino acid + H(+). It carries out the reaction glycyl-tRNA(Ala) + H2O = tRNA(Ala) + glycine + H(+). In terms of biological role, D-aminoacyl-tRNA deacylase with broad substrate specificity. By recycling D-aminoacyl-tRNA to D-amino acids and free tRNA molecules, this enzyme counteracts the toxicity associated with the formation of D-aminoacyl-tRNA entities in vivo. The sequence is that of D-aminoacyl-tRNA deacylase from Methanospirillum hungatei JF-1 (strain ATCC 27890 / DSM 864 / NBRC 100397 / JF-1).